The chain runs to 357 residues: Protein FAM118A (357 aa).

N-acetylmethionine is present on M1. Residues 30-46 (LLLVIGTGVSAAVAPGI) traverse the membrane as a helical segment. Position 311 is a phosphoserine (S311).

It belongs to the FAM118 family.

The protein localises to the membrane. The protein is Protein FAM118A (Fam118a) of Mus musculus (Mouse).